The sequence spans 581 residues: MAVTLVTSCASSSRFHFRSFSSSPSSLSSCFVRFQLLSRLRVSFAITPLYCSSKATAHTIAHATLGLTQANSVDHPKISFSGKEIDVTEWKGDILAVGVTEKDMAKDANSKFENPILKKLDAHLGGLLADVSAEEDFSGKPGQSTVLRLPGLGSKRVGLIGLGKSASTPSAFQSLGEAVAAAAKASQASSVAVVLASSESFSDESKLSSASDIASGTVLGLFEDSRYKSESKKPSLKSVVFIGFGTGPELENKLKYAEHVSYGVIFTKELVNSPANVLSPAVLAEEASNLASMYSNVMTANILKEEQCKELKMGSYLAVAAASANPPHFIHLIYKPSSGPVKTKLALVGKGLTFDSGGYNIKIGPELIIELMKIDVGGSAAVLGAAKAIGEIKPPGVEVHFIVAACENMISGTGMRPGDVITASNGKTIEVNDTDSEGRLTLADALVYACNQGVDKIVDIATLTGEIIVALGPSMAGMYTASDELAKEVIAASQRSGEKLWRMPMEESYWEMMKSGVADMVNFGGRAGGSITAALFLKRFVSENVEWLHIDMAGRVWNEKKKAATGFGVATLVEWVQNNSS.

The N-terminal 50 residues, 1-50 (MAVTLVTSCASSSRFHFRSFSSSPSSLSSCFVRFQLLSRLRVSFAITPLY), are a transit peptide targeting the chloroplast. 2 residues coordinate Mn(2+): Lys350 and Asp355. Residue Lys362 is part of the active site. Positions 375, 435, and 437 each coordinate Mn(2+). The active site involves Arg439.

It belongs to the peptidase M17 family. In terms of assembly, homohexamer (dimer of homotrimers). Requires Mn(2+) as cofactor.

The protein resides in the plastid. The protein localises to the chloroplast. It carries out the reaction Release of an N-terminal amino acid, Xaa-|-Yaa-, in which Xaa is preferably Leu, but may be other amino acids including Pro although not Arg or Lys, and Yaa may be Pro. Amino acid amides and methyl esters are also readily hydrolyzed, but rates on arylamides are exceedingly low.. It catalyses the reaction Release of N-terminal proline from a peptide.. Functionally, presumably involved in the processing and regular turnover of intracellular proteins. Catalyzes the removal of unsubstituted N-terminal amino acids from various peptides. Possesses Cys-Gly dipeptidase activity. The sequence is that of Leucine aminopeptidase 3, chloroplastic from Arabidopsis thaliana (Mouse-ear cress).